A 65-amino-acid polypeptide reads, in one-letter code: Large ribosomal subunit protein bL35 (65 aa).

A disordered region spans residues 1 to 22 (MPKMKTKSSAKKRFKVTGSGKI).

The protein belongs to the bacterial ribosomal protein bL35 family.

The polypeptide is Large ribosomal subunit protein bL35 (Flavobacterium johnsoniae (strain ATCC 17061 / DSM 2064 / JCM 8514 / BCRC 14874 / CCUG 350202 / NBRC 14942 / NCIMB 11054 / UW101) (Cytophaga johnsonae)).